The primary structure comprises 3013 residues: DmX-like protein 1 (3013 aa).

WD repeat units lie at residues 108–145 (FLDS…TEDE), 164–204 (KTAS…RPAV), and 227–275 (AHPR…NDCF). Residues Ser322, Ser420, Ser423, and Ser434 each carry the phosphoserine modification. The interval 418–442 (PSSEASVEDSIQADLKSDEELDDGV) is disordered. Residues 474–514 (DHQIEVLLSEWSKNADMLFSIHPMDGSLLVWHVDWLDEYQP) form a WD 4 repeat. The residue at position 572 (Ser572) is a Phosphoserine. 2 WD repeats span residues 578–619 (AHSK…ESAF) and 842–893 (KKRL…TPVS). Residues Ser916 and Ser922 each carry the phosphoserine modification. WD repeat units follow at residues 970 to 1008 (HLSS…GESA), 1145 to 1193 (EDGS…PLSK), and 1208 to 1248 (GAPP…EPVI). Phosphoserine occurs at positions 1829, 1896, 1903, and 1965. Disordered regions lie at residues 2364-2406 (GQAN…PPAV) and 2431-2462 (QSRA…GLQL). The segment covering 2385 to 2398 (SKVSARESPVSSSS) has biased composition (low complexity). Residues 2437-2455 (DSEESLESDDEEEEDDDDA) show a composition bias toward acidic residues. WD repeat units lie at residues 2728-2769 (KAIN…TCFR), 2771-2810 (GGNS…CPVT), 2822-2864 (CHNK…ANSL), 2870-2909 (CHDS…QRQL), 2912-2951 (SHDS…LLHT), and 2964-3002 (NIGT…SPLN).

The polypeptide is DmX-like protein 1 (Dmxl1) (Mus musculus (Mouse)).